A 109-amino-acid chain; its full sequence is Spermidine export protein MdtI (109 aa).

The next 4 membrane-spanning stretches (helical) occupy residues 6-26 (FYHI…NILL), 35-55 (VWLG…LAQA), 64-84 (AYAL…WILF), and 88-108 (LNYK…MIKL).

The protein belongs to the drug/metabolite transporter (DMT) superfamily. Small multidrug resistance (SMR) (TC 2.A.7.1) family. MdtI subfamily. In terms of assembly, forms a complex with MdtJ.

Its subcellular location is the cell inner membrane. Functionally, catalyzes the excretion of spermidine. In Yersinia enterocolitica serotype O:8 / biotype 1B (strain NCTC 13174 / 8081), this protein is Spermidine export protein MdtI.